Here is a 445-residue protein sequence, read N- to C-terminus: Methionine aminopeptidase 2-1 (445 aa).

The disordered stretch occupies residues 1-86 (MAAQASEDLQ…VQSEPPRVPL (86 aa)). Residues 34–46 (GEAEDDSDDDADE) show a composition bias toward acidic residues. Basic residues predominate over residues 59–74 (AKKKKKRKSKKKKKGG). Position 198 (histidine 198) interacts with substrate. The a divalent metal cation site is built by aspartate 218, aspartate 229, and histidine 298. Histidine 306 contacts substrate. Residues glutamate 331 and glutamate 426 each coordinate a divalent metal cation.

The protein belongs to the peptidase M24A family. Methionine aminopeptidase eukaryotic type 2 subfamily. It depends on Co(2+) as a cofactor. Requires Zn(2+) as cofactor. The cofactor is Mn(2+). Fe(2+) serves as cofactor.

Its subcellular location is the cytoplasm. It catalyses the reaction Release of N-terminal amino acids, preferentially methionine, from peptides and arylamides.. Its function is as follows. Cotranslationally removes the N-terminal methionine from nascent proteins. The N-terminal methionine is often cleaved when the second residue in the primary sequence is small and uncharged (Met-Ala-, Cys, Gly, Pro, Ser, Thr, or Val). This chain is Methionine aminopeptidase 2-1, found in Aspergillus flavus (strain ATCC 200026 / FGSC A1120 / IAM 13836 / NRRL 3357 / JCM 12722 / SRRC 167).